The chain runs to 246 residues: Small ribosomal subunit protein uS2 (246 aa).

The protein belongs to the universal ribosomal protein uS2 family.

This chain is Small ribosomal subunit protein uS2, found in Dictyoglomus thermophilum (strain ATCC 35947 / DSM 3960 / H-6-12).